The chain runs to 101 residues: Putative RNA-binding protein RbpA (101 aa).

In terms of domain architecture, RRM spans 2–79 (SIYVGNLSYD…RDLKVNKAKP (78 aa)). The span at 73-83 (KVNKAKPRENR) shows a compositional bias: basic and acidic residues. The disordered stretch occupies residues 73-101 (KVNKAKPRENRSGGGSFGGGRKSYGGSRY). A compositionally biased stretch (gly residues) spans 84 to 101 (SGGGSFGGGRKSYGGSRY).

This Synechocystis sp. (strain ATCC 27184 / PCC 6803 / Kazusa) protein is Putative RNA-binding protein RbpA (rbpA).